The following is a 527-amino-acid chain: Peptide chain release factor 3 (527 aa).

Residues 9 to 278 (NKRRTFAIIS…GLTQWAPKPQ (270 aa)) form the tr-type G domain. GTP contacts are provided by residues 18 to 25 (SHPDAGKT), 86 to 90 (DTPGH), and 140 to 143 (NKLD).

This sequence belongs to the TRAFAC class translation factor GTPase superfamily. Classic translation factor GTPase family. PrfC subfamily.

It is found in the cytoplasm. Its function is as follows. Increases the formation of ribosomal termination complexes and stimulates activities of RF-1 and RF-2. It binds guanine nucleotides and has strong preference for UGA stop codons. It may interact directly with the ribosome. The stimulation of RF-1 and RF-2 is significantly reduced by GTP and GDP, but not by GMP. This Haemophilus influenzae (strain 86-028NP) protein is Peptide chain release factor 3.